The sequence spans 206 residues: MAVRSKSSKAWLHEHINDHYVHMAQKDGYRARAAYKLLEINEKDKIIKPGTVLADLGSAPGSWSQVAAKLTGTSGTVFALDILPMEAIGGVSFIQGDFRENDVLAQFETLLDNRPLDLVICDMAPNMSGNAVSDQARSFYLCELALDFASQHLKTGGSFLVKVFQGAGYQEYMAAMREIFGTVQTRKPEASRNRSSEIYLLGKNKR.

S-adenosyl-L-methionine is bound by residues G61, W63, D81, D97, and D122. K162 (proton acceptor) is an active-site residue.

It belongs to the class I-like SAM-binding methyltransferase superfamily. RNA methyltransferase RlmE family.

Its subcellular location is the cytoplasm. The catalysed reaction is uridine(2552) in 23S rRNA + S-adenosyl-L-methionine = 2'-O-methyluridine(2552) in 23S rRNA + S-adenosyl-L-homocysteine + H(+). Functionally, specifically methylates the uridine in position 2552 of 23S rRNA at the 2'-O position of the ribose in the fully assembled 50S ribosomal subunit. The chain is Ribosomal RNA large subunit methyltransferase E from Neisseria gonorrhoeae (strain NCCP11945).